The following is a 336-amino-acid chain: Aspartate--ammonia ligase (336 aa).

Belongs to the class-II aminoacyl-tRNA synthetase family. AsnA subfamily.

It localises to the cytoplasm. The enzyme catalyses L-aspartate + NH4(+) + ATP = L-asparagine + AMP + diphosphate + H(+). It participates in amino-acid biosynthesis; L-asparagine biosynthesis; L-asparagine from L-aspartate (ammonia route): step 1/1. The protein is Aspartate--ammonia ligase of Limosilactobacillus reuteri (strain DSM 20016) (Lactobacillus reuteri).